The primary structure comprises 204 residues: Recombination protein RecR (204 aa).

The segment at Cys-58–Cys-75 adopts a C4-type zinc-finger fold. A Toprim domain is found at Thr-83–Pro-181.

The protein belongs to the RecR family.

Functionally, may play a role in DNA repair. It seems to be involved in an RecBC-independent recombinational process of DNA repair. It may act with RecF and RecO. The protein is Recombination protein RecR of Chlorobium luteolum (strain DSM 273 / BCRC 81028 / 2530) (Pelodictyon luteolum).